A 311-amino-acid polypeptide reads, in one-letter code: Malate dehydrogenase (311 aa).

NAD(+) contacts are provided by residues 7 to 13 (GAAGGIG) and Asp-34. Substrate is bound by residues Arg-81 and Arg-87. NAD(+)-binding positions include Asn-94 and 117–119 (ITN). 2 residues coordinate substrate: Asn-119 and Arg-153. The active-site Proton acceptor is the His-177. Position 227 (Met-227) interacts with NAD(+).

This sequence belongs to the LDH/MDH superfamily. MDH type 1 family. In terms of assembly, homodimer.

The enzyme catalyses (S)-malate + NAD(+) = oxaloacetate + NADH + H(+). Catalyzes the reversible oxidation of malate to oxaloacetate. The chain is Malate dehydrogenase from Haemophilus influenzae (strain 86-028NP).